Consider the following 555-residue polypeptide: Connector enhancer of kinase suppressor of ras 3 (555 aa).

Residues 7–72 (WSPKQVVDWT…LEAVDLLCAL (66 aa)) enclose the SAM domain. The 95-residue stretch at 80–174 (NMKNLVLKLR…TTVQKDCFVA (95 aa)) folds into the CRIC domain. The PDZ domain occupies 211-293 (EVHLPNIKPG…GVVLLLKKRP (83 aa)). Disordered stretches follow at residues 309 to 334 (WKPPLVQTSPPPATTQSPESTMDTSL), 347 to 390 (PPPP…FLDQ), and 517 to 537 (IPFQEEGTKKKSGSSATKSSS). Residues 325 to 546 (SPESTMDTSL…STEPSLLVSW (222 aa)) enclose the DUF1170 domain. A phosphoserine mark is found at Ser-381 and Ser-383.

The protein belongs to the CNKSR family. In terms of assembly, interacts with epithelial sodium channel ENaC. Interacts directly with SCNN1A (ENaC subunit alpha) and SCNN1B (ENaC subunit beta) C-terminal tails. Interacts with ENaC regulatory proteins NEDD4L, RAF1 and SGK1.

Its subcellular location is the cytoplasm. The protein localises to the apical cell membrane. In terms of biological role, involved in transepithelial sodium transport. Regulates aldosterone-induced and epithelial sodium channel (ENaC)-mediated sodium transport through regulation of ENaC cell surface expression. Acts as a scaffold protein coordinating the assembly of an ENaC-regulatory complex (ERC). The polypeptide is Connector enhancer of kinase suppressor of ras 3 (CNKSR3) (Homo sapiens (Human)).